The primary structure comprises 220 residues: Nicotinamidase (220 aa).

The active site involves aspartate 11. Zn(2+) contacts are provided by aspartate 53, histidine 55, and histidine 94. Lysine 119 is an active-site residue. The active-site Nucleophile is the cysteine 163.

The protein belongs to the isochorismatase family.

It is found in the cytoplasm. The protein resides in the nucleus. The protein localises to the peroxisome. The catalysed reaction is nicotinamide + H2O = nicotinate + NH4(+). The protein operates within cofactor biosynthesis; nicotinate biosynthesis; nicotinate from nicotinamide: step 1/1. Catalyzes the deamidation of nicotinamide, an early step in the NAD(+) salvage pathway. The polypeptide is Nicotinamidase (pnc1) (Schizosaccharomyces pombe (strain 972 / ATCC 24843) (Fission yeast)).